We begin with the raw amino-acid sequence, 174 residues long: Translation initiation factor IF-3 (174 aa).

This sequence belongs to the IF-3 family. As to quaternary structure, monomer.

It localises to the cytoplasm. Functionally, IF-3 binds to the 30S ribosomal subunit and shifts the equilibrium between 70S ribosomes and their 50S and 30S subunits in favor of the free subunits, thus enhancing the availability of 30S subunits on which protein synthesis initiation begins. The chain is Translation initiation factor IF-3 from Helicobacter hepaticus (strain ATCC 51449 / 3B1).